The chain runs to 286 residues: Ribosomal RNA small subunit methyltransferase H (286 aa).

S-adenosyl-L-methionine-binding positions include 30 to 32 (GGH), aspartate 49, phenylalanine 88, aspartate 97, and glutamine 104. The disordered stretch occupies residues 260–286 (HPLQPSDEESFNNPASRSAKLRALEMR).

Belongs to the methyltransferase superfamily. RsmH family.

Its subcellular location is the cytoplasm. It carries out the reaction cytidine(1402) in 16S rRNA + S-adenosyl-L-methionine = N(4)-methylcytidine(1402) in 16S rRNA + S-adenosyl-L-homocysteine + H(+). Specifically methylates the N4 position of cytidine in position 1402 (C1402) of 16S rRNA. This Solibacter usitatus (strain Ellin6076) protein is Ribosomal RNA small subunit methyltransferase H.